Reading from the N-terminus, the 538-residue chain is Nicotinate phosphoribosyltransferase (538 aa).

Nicotinate contacts are provided by Tyr21 and Thr210. A Phosphohistidine modification is found at His213. Arg318 lines the nicotinate pocket. 5-phospho-alpha-D-ribose 1-diphosphate is bound at residue Thr380.

The protein belongs to the NAPRTase family. As to quaternary structure, homodimer. It depends on Mg(2+) as a cofactor. Requires Mn(2+) as cofactor. Transiently phosphorylated on a His residue during the reaction cycle. Phosphorylation strongly increases the affinity for substrates and increases the rate of nicotinate D-ribonucleotide production. Dephosphorylation regenerates the low-affinity form of the enzyme, leading to product release.

Its subcellular location is the cytoplasm. The protein resides in the cytosol. The catalysed reaction is nicotinate + 5-phospho-alpha-D-ribose 1-diphosphate + ATP + H2O = nicotinate beta-D-ribonucleotide + ADP + phosphate + diphosphate. It functions in the pathway cofactor biosynthesis; NAD(+) biosynthesis; nicotinate D-ribonucleotide from nicotinate: step 1/1. Its function is as follows. Catalyzes the first step in the biosynthesis of NAD from nicotinic acid, the ATP-dependent synthesis of beta-nicotinate D-ribonucleotide from nicotinate and 5-phospho-D-ribose 1-phosphate. Helps prevent cellular oxidative stress via its role in NAD biosynthesis. The polypeptide is Nicotinate phosphoribosyltransferase (Naprt) (Rattus norvegicus (Rat)).